The chain runs to 129 residues: Large ribosomal subunit protein uL22 (129 aa).

Belongs to the universal ribosomal protein uL22 family. Part of the 50S ribosomal subunit.

In terms of biological role, this protein binds specifically to 23S rRNA; its binding is stimulated by other ribosomal proteins, e.g. L4, L17, and L20. It is important during the early stages of 50S assembly. It makes multiple contacts with different domains of the 23S rRNA in the assembled 50S subunit and ribosome. The globular domain of the protein is located near the polypeptide exit tunnel on the outside of the subunit, while an extended beta-hairpin is found that lines the wall of the exit tunnel in the center of the 70S ribosome. The protein is Large ribosomal subunit protein uL22 of Bartonella henselae (strain ATCC 49882 / DSM 28221 / CCUG 30454 / Houston 1) (Rochalimaea henselae).